Reading from the N-terminus, the 224-residue chain is Urease accessory protein UreF (224 aa).

Belongs to the UreF family. UreD, UreF and UreG form a complex that acts as a GTP-hydrolysis-dependent molecular chaperone, activating the urease apoprotein by helping to assemble the nickel containing metallocenter of UreC. The UreE protein probably delivers the nickel.

Its subcellular location is the cytoplasm. Functionally, required for maturation of urease via the functional incorporation of the urease nickel metallocenter. The polypeptide is Urease accessory protein UreF (Pseudomonas fluorescens (strain ATCC BAA-477 / NRRL B-23932 / Pf-5)).